The primary structure comprises 210 residues: Riboflavin kinase (210 aa).

The segment at 1–81 (MECKERRLIG…DLLRYFNIAS (81 aa)) is H-T-H motif-like. The segment at 82–210 (IRLIGRVISG…GDIVEVEILL (129 aa)) is riboflavin kinase. Residue 91-96 (GLGEGA) participates in CDP binding. Residues T120 and N122 each coordinate Mg(2+). FMN-binding residues include T177 and E185. 190-193 (VKLR) is a binding site for CDP.

This sequence belongs to the archaeal riboflavin kinase family. Requires Mg(2+) as cofactor.

The catalysed reaction is riboflavin + CTP = CDP + FMN + H(+). The protein operates within cofactor biosynthesis; FMN biosynthesis; FMN from riboflavin (CTP route): step 1/1. In terms of biological role, catalyzes the CTP-dependent phosphorylation of riboflavin (vitamin B2) to form flavin mononucleotide (FMN). In Pyrobaculum aerophilum (strain ATCC 51768 / DSM 7523 / JCM 9630 / CIP 104966 / NBRC 100827 / IM2), this protein is Riboflavin kinase (ribK).